The sequence spans 283 residues: NADPH-dependent 7-cyano-7-deazaguanine reductase (283 aa).

Position 90-92 (90-92 (IES)) interacts with substrate. 92-93 (SK) serves as a coordination point for NADPH. Residue cysteine 190 is the Thioimide intermediate of the active site. Residue aspartate 197 is the Proton donor of the active site. 229 to 230 (HE) provides a ligand contact to substrate. An NADPH-binding site is contributed by 258–259 (RG).

The protein belongs to the GTP cyclohydrolase I family. QueF type 2 subfamily. As to quaternary structure, homodimer.

It is found in the cytoplasm. It carries out the reaction 7-aminomethyl-7-carbaguanine + 2 NADP(+) = 7-cyano-7-deazaguanine + 2 NADPH + 3 H(+). It functions in the pathway tRNA modification; tRNA-queuosine biosynthesis. Its function is as follows. Catalyzes the NADPH-dependent reduction of 7-cyano-7-deazaguanine (preQ0) to 7-aminomethyl-7-deazaguanine (preQ1). This is NADPH-dependent 7-cyano-7-deazaguanine reductase from Dechloromonas aromatica (strain RCB).